Consider the following 228-residue polypeptide: D-lyxose/D-mannose isomerase (228 aa).

Mn(2+) is bound by residues His-103, His-105, Glu-110, and His-171.

This sequence belongs to the D-lyxose ketol-isomerase family. In terms of assembly, homodimer. Mn(2+) is required as a cofactor.

The enzyme catalyses D-lyxose = D-xylulose. The catalysed reaction is D-mannose = D-fructose. In terms of biological role, sugar isomerase that catalyzes the reversible isomerization of D-lyxose to D-xylulose, and D-mannose to D-fructose. Shows optimum activity using D-lyxose as substrate, but can also effectively catalyze the isomerization between D-fructose and D-mannose. Shows lower activity with L-gulose, D-talose and L-ribose. This is D-lyxose/D-mannose isomerase from Serratia proteamaculans.